A 50-amino-acid chain; its full sequence is Kappa-actitoxin-Bcs4a (50 aa).

Belongs to the sea anemone type 5 potassium channel toxin family. Post-translationally, contains 4 disulfide bonds.

It localises to the secreted. The protein localises to the nematocyst. Functionally, inhibits voltage-gated potassium channels (Kv1/KCNA). Is potent on Drosophila Shaker IR channels (IC(50)=94.25 nM), and rKv1.2/KCNA2 (IC(50)=172.59 nM), and moderately active on hKv1.3/KCNA3 (IC(50)=1006.48 nM), rKv1.6/KCNA6 (IC(50)=2245.93 nM), and Kv1.1/KCNA1 (IC(50) around 3 uM). In vivo, induces a rapid increase in swimming speed on zebrafish larvae, as well as death which occurs between 2 and 18 hours later. Also paralyzes swimming crabs (C.danae) when injected at the junction between the body and the walking leg. In Bunodosoma caissarum (Sea anemone), this protein is Kappa-actitoxin-Bcs4a.